A 380-amino-acid chain; its full sequence is Chaperone protein DnaJ (380 aa).

Residues 5 to 69 (DYYEILGVSK…QKRAHYDQFG (65 aa)) form the J domain. A CR-type zinc finger spans residues 135–217 (GKETDIEIPR…CGGTGRVKRR (83 aa)). Zn(2+)-binding residues include Cys148, Cys151, Cys165, Cys168, Cys191, Cys194, Cys205, and Cys208. 4 CXXCXGXG motif repeats span residues 148–155 (CNTCHGTG), 165–172 (CSYCHGTG), 191–198 (CPYCGGTG), and 205–212 (CTTCGGTG).

It belongs to the DnaJ family. As to quaternary structure, homodimer. Requires Zn(2+) as cofactor.

The protein localises to the cytoplasm. Functionally, participates actively in the response to hyperosmotic and heat shock by preventing the aggregation of stress-denatured proteins and by disaggregating proteins, also in an autonomous, DnaK-independent fashion. Unfolded proteins bind initially to DnaJ; upon interaction with the DnaJ-bound protein, DnaK hydrolyzes its bound ATP, resulting in the formation of a stable complex. GrpE releases ADP from DnaK; ATP binding to DnaK triggers the release of the substrate protein, thus completing the reaction cycle. Several rounds of ATP-dependent interactions between DnaJ, DnaK and GrpE are required for fully efficient folding. Also involved, together with DnaK and GrpE, in the DNA replication of plasmids through activation of initiation proteins. In Parageobacillus thermoglucosidasius (Geobacillus thermoglucosidasius), this protein is Chaperone protein DnaJ.